The primary structure comprises 186 residues: Imidazole glycerol phosphate synthase subunit HisH (186 aa).

In terms of domain architecture, Glutamine amidotransferase type-1 spans 1–186; it reads MIAIIDYGSG…KLLRNFGELA (186 aa). The active-site Nucleophile is Cys-72. Residues His-167 and Glu-169 contribute to the active site.

Heterodimer of HisH and HisF.

It is found in the cytoplasm. It catalyses the reaction 5-[(5-phospho-1-deoxy-D-ribulos-1-ylimino)methylamino]-1-(5-phospho-beta-D-ribosyl)imidazole-4-carboxamide + L-glutamine = D-erythro-1-(imidazol-4-yl)glycerol 3-phosphate + 5-amino-1-(5-phospho-beta-D-ribosyl)imidazole-4-carboxamide + L-glutamate + H(+). It carries out the reaction L-glutamine + H2O = L-glutamate + NH4(+). Its pathway is amino-acid biosynthesis; L-histidine biosynthesis; L-histidine from 5-phospho-alpha-D-ribose 1-diphosphate: step 5/9. In terms of biological role, IGPS catalyzes the conversion of PRFAR and glutamine to IGP, AICAR and glutamate. The HisH subunit catalyzes the hydrolysis of glutamine to glutamate and ammonia as part of the synthesis of IGP and AICAR. The resulting ammonia molecule is channeled to the active site of HisF. The sequence is that of Imidazole glycerol phosphate synthase subunit HisH from Picrophilus torridus (strain ATCC 700027 / DSM 9790 / JCM 10055 / NBRC 100828 / KAW 2/3).